Reading from the N-terminus, the 151-residue chain is Chromophore lyase CpcS/CpeS homolog (151 aa).

The protein belongs to the CpcS/CpeS biliprotein lyase family.

It localises to the plastid. It is found in the chloroplast. In terms of biological role, might function to covalently attach a chromophore to Cys residue(s) of phycobiliproteins. This is Chromophore lyase CpcS/CpeS homolog from Gracilaria tenuistipitata var. liui (Red alga).